Here is a 649-residue protein sequence, read N- to C-terminus: MSPSKWLLTYERAVKKATKVKLAAPKYKHVEIILEATTEDPETLENVIQALCERLKEQSWTIVFKTLIVFHVMLKEGAPNTTIVALSQRPRILEVLKASSLLAQGKNIYNYSRFLSERAKQYGRLGVDYAQVGDAPKKKIREMKLENGLLRNVEGIQAQLRRLIKCQFVAEEIDNDIAITAFRLLVGDLLVLFKAVNIGVINVLEHYFEMGHHDAAQSLRIYKTFVNQTEDIINYLSTARSLEFVTKFPVPNIKHAPISLTASLEEYLNDPDFEENRKQYLQNKSGSPVEETAILNRKPTLRKKKSIPKKQNESSSTIQKENTVQQEASSSEEEAVKSLPETQRTTSRIETQEEEIKEEEMEGEEEEEEEEVPNYESENELEDKVGDLSLSLGVASSFVDEMLRERNNLSAEGTSASPSLDKKSESTNIVQPIPSHPNDSLNPFYNSSSPTYHPQPIPPQLQQVQLLSQMAGNQMANIQYTMNGMQQTGASPNTALNISQVNMYAQNNPVNPSTTNPFQNFLRQPSYQGMQFEQQQPTTIPLQPNIPVLNQQYPVMIPAMEDSRGPLPSPAHIMYPEGSPGFIQHSPNGFTHGHSASPVNIGQKLDVPERPMSTPYTASKNPFSTRELAEPTDLARNSISTESKNPFRS.

The 135-residue stretch at Ser-2–Pro-136 folds into the ENTH domain. 3 disordered regions span residues Tyr-280 to Glu-382, Leu-409 to Ser-440, and Phe-590 to Ser-649. 2 positions are modified to phosphoserine: Ser-285 and Ser-287. Residues Pro-299–Pro-308 show a composition bias toward basic residues. Composition is skewed to polar residues over residues Glu-313–Gln-326 and Pro-340–Ile-349. Residues Gln-352 to Leu-381 show a composition bias toward acidic residues. Polar residues-rich tracts occupy residues Leu-409–Pro-418, Thr-614–Ser-624, and Ala-635–Ser-649. Thr-414 is subject to Phosphothreonine. At Ser-417 the chain carries Phosphoserine.

It is found in the cytoplasm. The protein is ENTH domain-containing protein C19F8.03c of Schizosaccharomyces pombe (strain 972 / ATCC 24843) (Fission yeast).